A 217-amino-acid chain; its full sequence is Adenosylcobinamide-GDP ribazoletransferase (217 aa).

5 helical membrane-spanning segments follow: residues 6–26 (ALLSFFTIIPAGVAKLDFKCA), 39–61 (GPAAAALWLGASPHVAYLLLLLM), 95–115 (GTGGIFAVVATYAVATASTAS), 116–136 (PLQLLLAEVFSKALIVTVAAF), and 162–182 (ALAVIICLRPAATLAALAVAL).

It belongs to the CobS family. Requires Mg(2+) as cofactor.

The protein resides in the cell membrane. It carries out the reaction alpha-ribazole + adenosylcob(III)inamide-GDP = adenosylcob(III)alamin + GMP + H(+). The enzyme catalyses alpha-ribazole 5'-phosphate + adenosylcob(III)inamide-GDP = adenosylcob(III)alamin 5'-phosphate + GMP + H(+). Its pathway is cofactor biosynthesis; adenosylcobalamin biosynthesis; adenosylcobalamin from cob(II)yrinate a,c-diamide: step 7/7. Its function is as follows. Joins adenosylcobinamide-GDP and alpha-ribazole to generate adenosylcobalamin (Ado-cobalamin). Also synthesizes adenosylcobalamin 5'-phosphate from adenosylcobinamide-GDP and alpha-ribazole 5'-phosphate. In Pyrobaculum calidifontis (strain DSM 21063 / JCM 11548 / VA1), this protein is Adenosylcobinamide-GDP ribazoletransferase.